The sequence spans 153 residues: Putative OPA3-like protein CG43998 (153 aa).

Residues 101 to 153 are a coiled coil; the sequence is ELSKTYTKTKKQNQEIEDQKRVLDECVDCISADVERNQREINWIKAALKNVEK.

Belongs to the OPA3 family.

The protein is Putative OPA3-like protein CG43998 of Drosophila melanogaster (Fruit fly).